Reading from the N-terminus, the 142-residue chain is Mitochondrial import receptor subunit TOM22 homolog (142 aa).

Over residues M1–G11 the composition is skewed to low complexity. The interval M1 to E42 is disordered. Position 2 is an N-acetylalanine (A2). The Cytoplasmic portion of the chain corresponds to A2–A83. S15 carries the phosphoserine modification. Residues K27–E42 show a composition bias toward acidic residues. Positions D41–G50 are import sequence; necessary for mitochondrion outer membrane localization and integration in the TOM complex. T43 is modified (phosphothreonine). The residue at position 45 (S45) is a Phosphoserine. Residues A83 to T103 form a TMD; necessary for mitochondrion outer membrane localization and integration in the TOM complex region. Residues A84–T103 form a helical membrane-spanning segment. Topologically, residues E104–I142 are mitochondrial intermembrane. Residues P123–I142 form a C-tail signal; necessary for mitochondrion outer membrane localization and integration in the TOM complex region.

It belongs to the Tom22 family. As to quaternary structure, forms part of the preprotein translocase complex of the outer mitochondrial membrane (TOM complex) which consists of at least 7 different proteins (TOMM5, TOMM6, TOMM7, TOMM20, TOMM22, TOMM40 and TOMM70). Interacts with TOMM40. Interacts with PPP2R2B. Ubiquitous.

The protein localises to the mitochondrion outer membrane. In terms of biological role, central receptor component of the translocase of the outer membrane of mitochondria (TOM complex) responsible for the recognition and translocation of cytosolically synthesized mitochondrial preproteins. Together with the peripheral receptor TOM20 functions as the transit peptide receptor and facilitates the movement of preproteins into the translocation pore. Required for the translocation across the mitochondrial outer membrane of cytochrome P450 monooxygenases. This chain is Mitochondrial import receptor subunit TOM22 homolog (TOMM22), found in Homo sapiens (Human).